The chain runs to 552 residues: Hydroxylamine reductase (552 aa).

Residues C5, C8, C20, and C27 each coordinate [2Fe-2S] cluster. Positions 251, 275, 319, 407, 435, 460, 494, and 496 each coordinate hybrid [4Fe-2O-2S] cluster. C407 is subject to Cysteine persulfide.

Belongs to the HCP family. Requires [2Fe-2S] cluster as cofactor. It depends on hybrid [4Fe-2O-2S] cluster as a cofactor.

Its subcellular location is the cytoplasm. The enzyme catalyses A + NH4(+) + H2O = hydroxylamine + AH2 + H(+). Functionally, catalyzes the reduction of hydroxylamine to form NH(3) and H(2)O. The protein is Hydroxylamine reductase of Shigella flexneri.